The primary structure comprises 382 residues: Cytochrome b (382 aa).

A run of 4 helical transmembrane segments spans residues 28–48 (YGFL…FLAS), 72–94 (WCFR…LHIL), 107–127 (SWIS…IGYV), and 169–189 (FFVL…IHIF). Residues His78 and His92 each coordinate heme b. Heme b is bound by residues His173 and His187. His192 contacts a ubiquinone. Helical transmembrane passes span 214–234 (LLSL…LQSI), 274–294 (IPSK…LFLL), 317–337 (VPMI…CQLP), and 340–360 (IFIL…LFAL).

Belongs to the cytochrome b family. The main subunits of complex b-c1 are: cytochrome b, cytochrome c1 and the Rieske protein. Heme b serves as cofactor.

Its subcellular location is the mitochondrion inner membrane. Component of the ubiquinol-cytochrome c reductase complex (complex III or cytochrome b-c1 complex) that is part of the mitochondrial respiratory chain. The b-c1 complex mediates electron transfer from ubiquinol to cytochrome c. Contributes to the generation of a proton gradient across the mitochondrial membrane that is then used for ATP synthesis. This Plasmodium vivax (strain Salvador I) protein is Cytochrome b (MT-CYB).